A 65-amino-acid chain; its full sequence is Precursor peptide TigB (65 aa).

6 TIGSVS motif repeats span residues T16–S21, T23–S28, T33–S38, T40–S45, T47–S52, and T54–S59. Residues I17, I24, I34, I41, I48, and I55 each carry the methylcyclopropylglycine modification.

Is subject to maturation by TigE, that catalyzes the formation of methylcyclopropylglycine (mCPG) residues from isoleucine residues residing in the repeating TIGSVS motifs.

Its function is as follows. Precursor peptide which undergoes post-translational modifications by tailoring enzymes, leading to the mature natural product. In Paramaledivibacter caminithermalis (strain DSM 15212 / CIP 107654 / DViRD3) (Clostridium caminithermale), this protein is Precursor peptide TigB.